Consider the following 578-residue polypeptide: Proline--tRNA ligase (578 aa).

The protein belongs to the class-II aminoacyl-tRNA synthetase family. ProS type 1 subfamily. Homodimer.

The protein resides in the cytoplasm. It carries out the reaction tRNA(Pro) + L-proline + ATP = L-prolyl-tRNA(Pro) + AMP + diphosphate. Its function is as follows. Catalyzes the attachment of proline to tRNA(Pro) in a two-step reaction: proline is first activated by ATP to form Pro-AMP and then transferred to the acceptor end of tRNA(Pro). As ProRS can inadvertently accommodate and process non-cognate amino acids such as alanine and cysteine, to avoid such errors it has two additional distinct editing activities against alanine. One activity is designated as 'pretransfer' editing and involves the tRNA(Pro)-independent hydrolysis of activated Ala-AMP. The other activity is designated 'posttransfer' editing and involves deacylation of mischarged Ala-tRNA(Pro). The misacylated Cys-tRNA(Pro) is not edited by ProRS. In Burkholderia pseudomallei (strain 668), this protein is Proline--tRNA ligase.